The sequence spans 89 residues: Large ribosomal subunit protein bL31B (89 aa).

The protein belongs to the bacterial ribosomal protein bL31 family. Type B subfamily. As to quaternary structure, part of the 50S ribosomal subunit.

The chain is Large ribosomal subunit protein bL31B from Corynebacterium urealyticum (strain ATCC 43042 / DSM 7109).